The primary structure comprises 430 residues: 2-deoxy-scyllo-inosose synthase (430 aa).

NAD(+)-binding positions include aspartate 42, 73–76, 105–109, 129–130, 140–142, and 151–152; these read EVHK, GVTGN, TT, SLK, and KN. Lysine 142 is an active-site residue. Glutamate 184 provides a ligand contact to Co(2+). Glutamate 244 is a catalytic residue. Positions 247 and 263 each coordinate Co(2+). The segment at 371-430 is disordered; that stretch reads RGGAGGGAAEPAAARTGPVPDGPEAAVPATPGPVPAGPAAAAPLPSGPAPTAPAAAGPVP. Residues 379 to 399 are compositionally biased toward low complexity; that stretch reads AEPAAARTGPVPDGPEAAVPA.

It belongs to the sugar phosphate cyclases superfamily. DOI synthase family. The cofactor is NAD(+). It depends on Co(2+) as a cofactor.

The catalysed reaction is D-glucose 6-phosphate = 2-deoxy-L-scyllo-inosose + phosphate. It participates in metabolic intermediate biosynthesis; 2-deoxystreptamine biosynthesis; 2-deoxystreptamine from D-glucose 6-phosphate: step 1/4. It functions in the pathway antibiotic biosynthesis; neomycin biosynthesis. Functionally, catalyzes the intramolecular carbocycle formation from D-glucose-6-phosphate to 2-deoxy-scyllo-inosose (DOI). This chain is 2-deoxy-scyllo-inosose synthase (neoC), found in Streptomyces fradiae (Streptomyces roseoflavus).